The sequence spans 347 residues: G-protein coupled receptor homolog U12 (347 aa).

6 helical membrane-spanning segments follow: residues 36 to 56 (GITL…MILY), 67 to 87 (FYVI…FFMT), 103 to 124 (LVYF…IIAT), 147 to 167 (IGIL…FVKT), 194 to 214 (IVFS…FYVI), and 236 to 256 (ILLL…ICEI). Cys101 and Cys176 form a disulfide bridge. The tract at residues 321–347 (QKRKDSDASEHDQNSKSKASVEKNQPL) is disordered. A compositionally biased stretch (basic and acidic residues) spans 322–341 (KRKDSDASEHDQNSKSKASV).

This sequence belongs to the G-protein coupled receptor 1 family.

The protein resides in the membrane. Its function is as follows. Probable G-protein coupled receptor. The chain is G-protein coupled receptor homolog U12 (U12) from Homo sapiens (Human).